A 956-amino-acid chain; its full sequence is Calsyntenin-3 (956 aa).

The N-terminal stretch at 1–19 (MTLLLLPLLLASLLASCSC) is a signal peptide. At 1-30 (MTLLLLPLLLASLLASCSCNKANKHKPWIE) the chain is on the cytoplasmic side. Residues 20 to 847 (NKANKHKPWI…SHRNSMIPSA (828 aa)) lie on the Extracellular side of the membrane. Cadherin domains lie at 29-145 (IEAE…APVF) and 146-246 (VERL…KPSW). The segment at residues 31 to 51 (AEYQGIVMENDNTVLLNPPLF) is an intramembrane region (helical). Over 52–71 (ALDKDAPLRYAGEICGFRLH) the chain is Cytoplasmic. Residues 72 to 94 (GSGVPFEAVILDKATGEGLIRAK) constitute an intramembrane region (helical). Over 95–151 (EPVDCEAQKEHTFTIQAYDCGEGPDGANTKKSHKATVHVRVNDVNEFAPVFVERLYR) the chain is Cytoplasmic. An intramembrane region (helical) is located at residues 152–172 (AAVTEGKLYDRILRVEAIDGD). At 173 to 255 (CSPQYSQICY…WQGWNKRIEY (83 aa)) the chain is on the cytoplasmic side. The chain crosses the membrane as a helical span at residues 256–276 (APGAGSLALFPGIRLETCDEP). At 277 to 364 (LWNIQATIEL…PLGGPSGLGS (88 aa)) the chain is on the lumenal side. Asn299, Asn327, Asn347, Asn507, and Asn740 each carry an N-linked (GlcNAc...) asparagine glycan. The chain crosses the membrane as a helical span at residues 848–868 (ATLIIVVCVGFLVLMVVLGLV). The Cytoplasmic portion of the chain corresponds to 869–956 (RIHSLHRRVS…RIIETPPHRY (88 aa)). The disordered stretch occupies residues 916–956 (QSCVTGAVGGQQEDEDSSDSEVADSPSSDERRIIETPPHRY). Residues 927–937 (QEDEDSSDSEV) show a composition bias toward acidic residues. Residues 943-956 (SDERRIIETPPHRY) show a composition bias toward basic and acidic residues.

The protein belongs to the calsyntenin family. Interacts (via cadherin domains) with both alpha and beta isoforms of neurexins (NRXN1, NRXN2 and NRXN3). Directly interacts with APBA2. Forms a tripartite complex with APBA2 and APP. Interacts with low affinity with KLC1. Interacts with SLC23A2/SVCT2. In terms of assembly, interacts with CIDEA; inhibiting the lipid transferase activity of CIDEA. Interacts with CIDEC; inhibiting the lipid transferase activity of CIDEC. In terms of processing, proteolytically processed under normal cellular conditions. A primary zeta-cleavage generates a large extracellular (soluble) N-terminal domain (sAlc) and a short C-terminal transmembrane fragment (CTF1). A secondary cleavage catalyzed by gamma-secretase within the transmembrane domain releases the beta-Alc-beta chain in the extracellular milieu and produces an intracellular fragment (AlcICD). This processing is strongly suppressed in the tripartite complex formed with APBA2 and APP, which seems to prevent the association with gamma-secretase. Post-translationally, ubiquitinated: endoplasmic reticulum-localized protein is ubiquitinated and degraded by the endoplasmic reticulum-associated degradation (ERAD) pathway. As to expression, according to PubMed:12498782, expressed predominantly in the brain and in kidney. Low levels in heart, skeletal muscle, liver, placenta, pancreas and lung. According to PubMed:12972431, predominant expression in brain, and only marginal in kidney. In brain, present throughout all cortical layers, highest levels in GABAergic neurons (based on morphology and distribution pattern). In terms of tissue distribution, expression is restricted to adipose tissue, with high expression in multilocular thermogenic adipocytes (brown adipose tissue).

The protein resides in the postsynaptic cell membrane. It localises to the endoplasmic reticulum membrane. It is found in the golgi apparatus membrane. The protein localises to the cell projection. Its subcellular location is the dendrite. The protein resides in the lipid droplet. Its function is as follows. Postsynaptic adhesion molecule that binds to presynaptic neurexins to mediate both excitatory and inhibitory synapse formation. Promotes synapse development by acting as a cell adhesion molecule at the postsynaptic membrane, which associates with both neurexin-alpha and neurexin-beta proteins at the presynaptic membrane. Regulates the balance between excitatory and inhibitory synapses by inhibiting formation of excitatory parallel-fiber synapses and promoting formation of inhibitory synapses in the same neuron. May also be involved in ascorbate (vitamin C) uptake via its interaction with SLC23A2/SVCT2. Complex formation with APBA2 and APP, stabilizes APP metabolism and enhances APBA2-mediated suppression of beta-APP40 secretion, due to the retardation of intracellular APP maturation. Adipose-specific isoform that plays a key role in adaptive thermogenesis. Facilitates the efficient use of stored triglyceride by promoting multilocular morphology of thermogenic adipocytes: acts by inhibiting the activity of CIDEA and CIDEC on lipid droplets, thereby preventing lipid droplet fusion and facilitating lipid utilization. May also participate in adaptive thermogenesis by promoting sympathetic innervation of thermogenic adipose tissue: acts by driving secretion of neurotrophic factor S100B from brown adipocytes, stimulating neurite outgrowth from sympathetic neurons. The protein is Calsyntenin-3 of Homo sapiens (Human).